Reading from the N-terminus, the 286-residue chain is tRNA dimethylallyltransferase (286 aa).

The segment at 18 to 21 (DSMQ) is interaction with substrate tRNA.

Belongs to the IPP transferase family. As to quaternary structure, monomer. Mg(2+) is required as a cofactor.

It catalyses the reaction adenosine(37) in tRNA + dimethylallyl diphosphate = N(6)-dimethylallyladenosine(37) in tRNA + diphosphate. In terms of biological role, catalyzes the transfer of a dimethylallyl group onto the adenine at position 37 in tRNAs that read codons beginning with uridine, leading to the formation of N6-(dimethylallyl)adenosine (i(6)A). In Tropheryma whipplei (strain TW08/27) (Whipple's bacillus), this protein is tRNA dimethylallyltransferase.